We begin with the raw amino-acid sequence, 337 residues long: Tetraacyldisaccharide 4'-kinase (337 aa).

Thr-72 to Thr-79 is a binding site for ATP.

Belongs to the LpxK family.

It catalyses the reaction a lipid A disaccharide + ATP = a lipid IVA + ADP + H(+). The protein operates within glycolipid biosynthesis; lipid IV(A) biosynthesis; lipid IV(A) from (3R)-3-hydroxytetradecanoyl-[acyl-carrier-protein] and UDP-N-acetyl-alpha-D-glucosamine: step 6/6. Its function is as follows. Transfers the gamma-phosphate of ATP to the 4'-position of a tetraacyldisaccharide 1-phosphate intermediate (termed DS-1-P) to form tetraacyldisaccharide 1,4'-bis-phosphate (lipid IVA). This chain is Tetraacyldisaccharide 4'-kinase, found in Shewanella sediminis (strain HAW-EB3).